A 742-amino-acid chain; its full sequence is mRNA export factor ICP27 homolog (742 aa).

Over residues Met1–Ala11 the composition is skewed to basic and acidic residues. The segment at Met1–Gln202 is disordered. Basic residues predominate over residues Ser72–Arg85. Over residues Lys153–His171 the composition is skewed to basic and acidic residues. Residues Cys179 to Gln202 show a composition bias toward polar residues. Residues Cys387, His494, Cys496, and Cys501 each coordinate Zn(2+). The CHC2-type zinc finger occupies Cys387–Cys501. The tract at residues Ala540–Asp742 is disordered. Residues Tyr578–His587 are compositionally biased toward basic and acidic residues. Residues Gly614 to Ser626 show a composition bias toward acidic residues. The segment covering Gln692–Thr703 has biased composition (polar residues).

It belongs to the HHV-1 ICP27 protein family. In terms of assembly, self-associates and forms high-molecular-mass complexes. Interacts with host DDX39A and DDX39B; these interactions are required for UL69 function in mRNA export. Interacts with host SUPT6H, EIF4A1 and PABPC1. In terms of processing, phosphorylated by UL97 and host CDK1, CDK7 and CD9. Phosphorylation by CDKs impacts on UL69 nuclear localization and activity.

It is found in the virion tegument. It localises to the virion. The protein localises to the host nucleus. Its subcellular location is the host cytoplasm. Its function is as follows. Immediate early (EI) protein that plays many roles during productive infection including regulation of host cell cycle progression, regulation of viral gene expression or nuclear export of intronless viral RNAs. Acts as a transcriptional transactivator via interaction with the cellular transcription elongation factor SUPT6H and as a nuclear RNA export factor via interaction with UAP56, a component of the cellular mRNA export machinery. This is mRNA export factor ICP27 homolog from Human cytomegalovirus (strain Merlin) (HHV-5).